A 341-amino-acid polypeptide reads, in one-letter code: tRNA N6-adenosine threonylcarbamoyltransferase (341 aa).

Fe cation is bound by residues histidine 115 and histidine 119. Substrate-binding positions include 137-141 (IVSGG), aspartate 170, glycine 183, aspartate 187, and asparagine 276. A Fe cation-binding site is contributed by aspartate 304.

Belongs to the KAE1 / TsaD family. Fe(2+) serves as cofactor.

It localises to the cytoplasm. It catalyses the reaction L-threonylcarbamoyladenylate + adenosine(37) in tRNA = N(6)-L-threonylcarbamoyladenosine(37) in tRNA + AMP + H(+). Its function is as follows. Required for the formation of a threonylcarbamoyl group on adenosine at position 37 (t(6)A37) in tRNAs that read codons beginning with adenine. Is involved in the transfer of the threonylcarbamoyl moiety of threonylcarbamoyl-AMP (TC-AMP) to the N6 group of A37, together with TsaE and TsaB. TsaD likely plays a direct catalytic role in this reaction. This chain is tRNA N6-adenosine threonylcarbamoyltransferase, found in Staphylococcus aureus (strain JH1).